The sequence spans 136 residues: Putative pre-16S rRNA nuclease (136 aa).

Belongs to the YqgF nuclease family.

The protein localises to the cytoplasm. Its function is as follows. Could be a nuclease involved in processing of the 5'-end of pre-16S rRNA. The sequence is that of Putative pre-16S rRNA nuclease from Francisella tularensis subsp. novicida (strain U112).